Reading from the N-terminus, the 486-residue chain is G2/mitotic-specific cyclin-4 (486 aa).

2 disordered regions span residues 1–80 (MRSY…SSNK) and 105–126 (VLLN…DKEN). Over residues 25 to 41 (ANLSSNHTTAGQPSTSS) the composition is skewed to polar residues. The span at 108–123 (NDDDDETDDEFDDEED) shows a compositional bias: acidic residues. The stretch at 122–184 (EDKENRYHDL…QSHTQDMRSI (63 aa)) forms a coiled coil. The region spanning 234 to 359 (EIFNYLHELE…FMIDVLEFDL (126 aa)) is the Cyclin N-terminal domain.

The protein belongs to the cyclin family. Cyclin AB subfamily. As to quaternary structure, interacts with IQG1.

Its function is as follows. 2/mitotic-specific cyclin essential for the control of the cell cycle at the G2/M (mitosis) transition. G2/M cyclins accumulate steadily during G2 and are abruptly destroyed at mitosis. Degradation is necessary for the cell to exit from mitosis. Plays a role in morphogenesis by negatively regulating polarized growth. Through binding to CDC28 regulates cytokinesis, partly by phosphorylation of the actomyosin ring component IQG1. The protein is G2/mitotic-specific cyclin-4 (CLB4) of Candida albicans (strain SC5314 / ATCC MYA-2876) (Yeast).